Consider the following 296-residue polypeptide: Ribosomal RNA small subunit methyltransferase A (296 aa).

6 residues coordinate S-adenosyl-L-methionine: Asn31, Leu33, Gly58, Glu79, Asp104, and Asn129.

Belongs to the class I-like SAM-binding methyltransferase superfamily. rRNA adenine N(6)-methyltransferase family. RsmA subfamily.

The protein resides in the cytoplasm. The catalysed reaction is adenosine(1518)/adenosine(1519) in 16S rRNA + 4 S-adenosyl-L-methionine = N(6)-dimethyladenosine(1518)/N(6)-dimethyladenosine(1519) in 16S rRNA + 4 S-adenosyl-L-homocysteine + 4 H(+). In terms of biological role, specifically dimethylates two adjacent adenosines (A1518 and A1519) in the loop of a conserved hairpin near the 3'-end of 16S rRNA in the 30S particle. May play a critical role in biogenesis of 30S subunits. The polypeptide is Ribosomal RNA small subunit methyltransferase A (Shouchella clausii (strain KSM-K16) (Alkalihalobacillus clausii)).